We begin with the raw amino-acid sequence, 185 residues long: Small ribosomal subunit protein uS5 (185 aa).

The S5 DRBM domain occupies F18–V81. The disordered stretch occupies residues S157–D185. Over residues R176 to D185 the composition is skewed to basic and acidic residues.

This sequence belongs to the universal ribosomal protein uS5 family. In terms of assembly, part of the 30S ribosomal subunit. Contacts proteins S4 and S8.

Its function is as follows. With S4 and S12 plays an important role in translational accuracy. In terms of biological role, located at the back of the 30S subunit body where it stabilizes the conformation of the head with respect to the body. This Xanthobacter autotrophicus (strain ATCC BAA-1158 / Py2) protein is Small ribosomal subunit protein uS5.